The sequence spans 529 residues: Tyrosinase (529 aa).

A signal peptide spans Met1–Gly18. Topologically, residues His19–Arg472 are lumenal. Residues Asn86, Asn111, and Asn161 are each glycosylated (N-linked (GlcNAc...) asparagine). Cu cation-binding residues include His180, His202, and His211. N-linked (GlcNAc...) asparagine glycans are attached at residues Asn230 and Asn336. Cu cation-binding residues include His362 and His366. Residue Asn370 is glycosylated (N-linked (GlcNAc...) asparagine). His389 is a Cu cation binding site. Residues Ile473–Thr495 traverse the membrane as a helical segment. Residues Ser496–Val529 are Cytoplasmic-facing.

Belongs to the tyrosinase family. Forms an OPN3-dependent complex with DCT in response to blue light in melanocytes. Cu(2+) serves as cofactor. Post-translationally, glycosylated.

The protein localises to the melanosome membrane. The protein resides in the melanosome. The enzyme catalyses 2 L-dopa + O2 = 2 L-dopaquinone + 2 H2O. The catalysed reaction is L-tyrosine + O2 = L-dopaquinone + H2O. It catalyses the reaction 2 5,6-dihydroxyindole-2-carboxylate + O2 = 2 indole-5,6-quinone-2-carboxylate + 2 H2O. Functionally, this is a copper-containing oxidase that functions in the formation of pigments such as melanins and other polyphenolic compounds. Catalyzes the initial and rate limiting step in the cascade of reactions leading to melanin production from tyrosine. In addition to hydroxylating tyrosine to DOPA (3,4-dihydroxyphenylalanine), also catalyzes the oxidation of DOPA to DOPA-quinone, and possibly the oxidation of DHI (5,6-dihydroxyindole) to indole-5,6 quinone. This is Tyrosinase (TYR) from Felis catus (Cat).